The chain runs to 348 residues: Glycerol-1-phosphate dehydrogenase [NAD(P)+] (348 aa).

Residues Gly94–Asp98 and Thr116–Ser119 each bind NAD(+). Asp121 contacts substrate. Ser125 lines the NAD(+) pocket. Asp168 is a binding site for substrate. Residues Asp168 and His248 each coordinate Zn(2+). His252 serves as a coordination point for substrate. His264 contacts Zn(2+).

The protein belongs to the glycerol-1-phosphate dehydrogenase family. The cofactor is Zn(2+).

It localises to the cytoplasm. The enzyme catalyses sn-glycerol 1-phosphate + NAD(+) = dihydroxyacetone phosphate + NADH + H(+). The catalysed reaction is sn-glycerol 1-phosphate + NADP(+) = dihydroxyacetone phosphate + NADPH + H(+). It participates in membrane lipid metabolism; glycerophospholipid metabolism. Its function is as follows. Catalyzes the NAD(P)H-dependent reduction of dihydroxyacetonephosphate (DHAP or glycerone phosphate) to glycerol 1-phosphate (G1P). The G1P thus generated is used as the glycerophosphate backbone of phospholipids in the cellular membranes of Archaea. The chain is Glycerol-1-phosphate dehydrogenase [NAD(P)+] from Haloquadratum walsbyi (strain DSM 16790 / HBSQ001).